A 241-amino-acid polypeptide reads, in one-letter code: Phycocyanobilin:ferredoxin oxidoreductase (241 aa).

It belongs to the HY2 family.

It catalyses the reaction (2R,3Z)-phycocyanobilin + 4 oxidized [2Fe-2S]-[ferredoxin] = biliverdin IXalpha + 4 reduced [2Fe-2S]-[ferredoxin] + 4 H(+). Its function is as follows. Catalyzes the four-electron reduction of biliverdin IX-alpha (2-electron reduction at both the A and D rings); the reaction proceeds via an isolatable 2-electron intermediate, 181,182-dihydrobiliverdin. This is Phycocyanobilin:ferredoxin oxidoreductase from Prochlorococcus marinus (strain MIT 9215).